The chain runs to 341 residues: Phenylalanine--tRNA ligase alpha subunit (341 aa).

Glutamate 256 serves as a coordination point for Mg(2+).

Belongs to the class-II aminoacyl-tRNA synthetase family. Phe-tRNA synthetase alpha subunit type 1 subfamily. As to quaternary structure, tetramer of two alpha and two beta subunits. Mg(2+) is required as a cofactor.

The protein resides in the cytoplasm. The enzyme catalyses tRNA(Phe) + L-phenylalanine + ATP = L-phenylalanyl-tRNA(Phe) + AMP + diphosphate + H(+). The polypeptide is Phenylalanine--tRNA ligase alpha subunit (Clostridium perfringens (strain 13 / Type A)).